The sequence spans 907 residues: Catenin alpha-1 (907 aa).

T2 carries the N-acetylthreonine modification. Residues 2–228 (TAVHAGNINF…PILYTASQAC (227 aa)) form an involved in homodimerization region. K57 is covalently cross-linked (Glycyl lysine isopeptide (Lys-Gly) (interchain with G-Cter in SUMO2)). The segment at 97–148 (VRKQGDLMKSAAGEFADDPCSSVKRGNMVRAARALLSAVTRLLILADMADVY) is interaction with JUP and CTNNB1. S264, S268, S296, and S298 each carry phosphoserine. The segment at 326–395 (TRDDRRERIV…AVMDHVSDSF (70 aa)) is interaction with alpha-actinin. Position 635 is a phosphothreonine (T635). S642 bears the Phosphoserine mark. Residue T646 is modified to Phosphothreonine. A phosphoserine mark is found at S653 and S656. T659 carries the phosphothreonine modification. A Glycyl lysine isopeptide (Lys-Gly) (interchain with G-Cter in SUMO2) cross-link involves residue K798. S852 carries the phosphoserine modification. Basic and acidic residues predominate over residues 865–881 (PEKKPLVKREKQDETQT). The disordered stretch occupies residues 865 to 895 (PEKKPLVKREKQDETQTKIKRASQKKHVNPV). Residues 882–892 (KIKRASQKKHV) show a composition bias toward basic residues.

This sequence belongs to the vinculin/alpha-catenin family. In terms of assembly, monomer and homodimer; the monomer preferentially binds to CTNNB1 and the homodimer to actin. Component of an cadherin:catenin adhesion complex composed of at least of CDH26, beta-catenin/CTNNB1, alpha-catenin/CTNNA1 and p120 catenin/CTNND1. Possible component of an E-cadherin/ catenin adhesion complex together with E-cadherin/CDH1 and beta-catenin/CTNNB1 or gamma-catenin/JUP; the complex is located to adherens junctions. The stable association of CTNNA1 is controversial as CTNNA1 was shown not to bind to F-actin when assembled in the complex. Alternatively, the CTNNA1-containing complex may be linked to F-actin by other proteins such as LIMA1. Binds AFDN and F-actin. Interacts with ARHGAP21. Interacts with AJUBA. Interacts with LIMA1. Interacts with vinculin/VCL. Interacts with TJP2/ZO2 (via N-terminus). Interacts with TJP1/ZO1 (via N-terminus). In terms of processing, sumoylated. Phosphorylation seems to contribute to the strength of cell-cell adhesion rather than to the basic capacity for cell-cell adhesion.

The protein resides in the cytoplasm. The protein localises to the cytoskeleton. It is found in the cell junction. Its subcellular location is the adherens junction. It localises to the cell membrane. The protein resides in the nucleus. Its function is as follows. Associates with the cytoplasmic domain of a variety of cadherins. The association of catenins to cadherins produces a complex which is linked to the actin filament network, and which seems to be of primary importance for cadherins cell-adhesion properties. Can associate with both E- and N-cadherins. Originally believed to be a stable component of E-cadherin/catenin adhesion complexes and to mediate the linkage of cadherins to the actin cytoskeleton at adherens junctions. In contrast, cortical actin was found to be much more dynamic than E-cadherin/catenin complexes and CTNNA1 was shown not to bind to F-actin when assembled in the complex suggesting a different linkage between actin and adherens junctions components. The homodimeric form may regulate actin filament assembly and inhibit actin branching by competing with the Arp2/3 complex for binding to actin filaments. Involved in the regulation of WWTR1/TAZ, YAP1 and TGFB1-dependent SMAD2 and SMAD3 nuclear accumulation. May play a crucial role in cell differentiation. The protein is Catenin alpha-1 of Oryctolagus cuniculus (Rabbit).